A 327-amino-acid chain; its full sequence is Interleukin-12 subunit beta (327 aa).

The signal sequence occupies residues 1-22 (MHPQQLVVSWFSLVLLASPIVA). Positions 23–106 (IWELEKNVYI…LSRSLLLLHK (84 aa)) constitute an Ig-like C2-type domain. Cys-50 and Cys-90 are disulfide-bonded. A glycan (N-linked (GlcNAc...) asparagine) is linked at Asn-223. Positions 238–327 (PPKNLQLRPL…WSEWASVSCS (90 aa)) constitute a Fibronectin type-III domain.

It belongs to the IL-12B family. As to quaternary structure, heterodimer with IL12A; disulfide-linked. The heterodimer is known as interleukin IL-12. Heterodimer with IL23A; disulfide-linked. The heterodimer is known as interleukin IL-23. Also secreted as a monomer. Interacts with NBR1; this interaction promotes IL-12 secretion.

The protein localises to the secreted. Cytokine that can act as a growth factor for activated T and NK cells, enhance the lytic activity of NK/lymphokine-activated killer cells, and stimulate the production of IFN-gamma by resting PBMC. The protein is Interleukin-12 subunit beta (IL12B) of Bubalus carabanensis (Swamp type water buffalo).